A 314-amino-acid polypeptide reads, in one-letter code: Zinc-binding alcohol dehydrogenase domain-containing protein cipB (314 aa).

It belongs to the zinc-containing alcohol dehydrogenase family.

Functionally, involved in osmoadaptation. The chain is Zinc-binding alcohol dehydrogenase domain-containing protein cipB (cipB) from Emericella nidulans (strain FGSC A4 / ATCC 38163 / CBS 112.46 / NRRL 194 / M139) (Aspergillus nidulans).